The chain runs to 406 residues: Arginine deiminase (406 aa).

C396 (amidino-cysteine intermediate) is an active-site residue.

Belongs to the arginine deiminase family.

The protein resides in the cytoplasm. The enzyme catalyses L-arginine + H2O = L-citrulline + NH4(+). It functions in the pathway amino-acid degradation; L-arginine degradation via ADI pathway; carbamoyl phosphate from L-arginine: step 1/2. This chain is Arginine deiminase, found in Aliivibrio fischeri (strain MJ11) (Vibrio fischeri).